The sequence spans 126 residues: Small ribosomal subunit protein uS11 (126 aa).

It belongs to the universal ribosomal protein uS11 family. Part of the 30S ribosomal subunit. Interacts with proteins S7 and S18. Binds to IF-3.

Located on the platform of the 30S subunit, it bridges several disparate RNA helices of the 16S rRNA. Forms part of the Shine-Dalgarno cleft in the 70S ribosome. The sequence is that of Small ribosomal subunit protein uS11 from Desulfotalea psychrophila (strain LSv54 / DSM 12343).